The sequence spans 217 residues: dITP/XTP pyrophosphatase (217 aa).

7–12 (SRNKKK) contacts substrate. D72 functions as the Proton acceptor in the catalytic mechanism. D72 is a Mg(2+) binding site. Substrate-binding positions include S73, 163-166 (FGYD), K195, and 200-201 (HR).

The protein belongs to the HAM1 NTPase family. Homodimer. Mg(2+) is required as a cofactor.

The enzyme catalyses XTP + H2O = XMP + diphosphate + H(+). It catalyses the reaction dITP + H2O = dIMP + diphosphate + H(+). The catalysed reaction is ITP + H2O = IMP + diphosphate + H(+). Its function is as follows. Pyrophosphatase that catalyzes the hydrolysis of nucleoside triphosphates to their monophosphate derivatives, with a high preference for the non-canonical purine nucleotides XTP (xanthosine triphosphate), dITP (deoxyinosine triphosphate) and ITP. Seems to function as a house-cleaning enzyme that removes non-canonical purine nucleotides from the nucleotide pool, thus preventing their incorporation into DNA/RNA and avoiding chromosomal lesions. The protein is dITP/XTP pyrophosphatase of Corynebacterium jeikeium (strain K411).